The following is a 429-amino-acid chain: Phosphomethylpyrimidine synthase (429 aa).

Residues Asn-66, Met-95, Tyr-124, His-163, 185 to 187 (SRG), 226 to 229 (DGLR), and Glu-265 each bind substrate. His-269 provides a ligand contact to Zn(2+). Tyr-292 lines the substrate pocket. His-333 is a binding site for Zn(2+). [4Fe-4S] cluster-binding residues include Cys-407, Cys-410, and Cys-414.

Belongs to the ThiC family. The cofactor is [4Fe-4S] cluster.

It catalyses the reaction 5-amino-1-(5-phospho-beta-D-ribosyl)imidazole + S-adenosyl-L-methionine = 4-amino-2-methyl-5-(phosphooxymethyl)pyrimidine + CO + 5'-deoxyadenosine + formate + L-methionine + 3 H(+). The protein operates within cofactor biosynthesis; thiamine diphosphate biosynthesis. Functionally, catalyzes the synthesis of the hydroxymethylpyrimidine phosphate (HMP-P) moiety of thiamine from aminoimidazole ribotide (AIR) in a radical S-adenosyl-L-methionine (SAM)-dependent reaction. The protein is Phosphomethylpyrimidine synthase of Pyrococcus furiosus (strain ATCC 43587 / DSM 3638 / JCM 8422 / Vc1).